A 230-amino-acid chain; its full sequence is Endonuclease NucS (230 aa).

It belongs to the NucS endonuclease family.

The protein resides in the cytoplasm. Its function is as follows. Cleaves both 3' and 5' ssDNA extremities of branched DNA structures. The sequence is that of Endonuclease NucS from Corynebacterium efficiens (strain DSM 44549 / YS-314 / AJ 12310 / JCM 11189 / NBRC 100395).